The following is a 465-amino-acid chain: ATP-dependent RNA helicase ddx19 (465 aa).

Residues 1–20 (MSEKETNTTSTENKEKEKQE) are compositionally biased toward basic and acidic residues. The disordered stretch occupies residues 1 to 45 (MSEKETNTTSTENKEKEKQEQTNTNSTTESTNNQVDEEYERPGRS). The span at 21–34 (QTNTNSTTESTNNQ) shows a compositional bias: low complexity. A Q motif motif is present at residues 70-98 (KTFEELGLKPELLKGVYAMGYNKPSKIQE). The region spanning 102–268 (PIIIQSPNNL…KKIVQDPYTS (167 aa)) is the Helicase ATP-binding domain. 115–122 (SQSGTGKT) lines the ATP pocket. Positions 215 to 218 (DEAD) match the DEAD box motif. A Helicase C-terminal domain is found at 297–449 (ILSDIYGFIS…ELKSSEIESL (153 aa)).

This sequence belongs to the DEAD box helicase family. DDX19/DBP5 subfamily.

It carries out the reaction ATP + H2O = ADP + phosphate + H(+). Functionally, ATP-binding RNA helicase required for normal differentiation and development. This is ATP-dependent RNA helicase ddx19 (helC) from Dictyostelium discoideum (Social amoeba).